We begin with the raw amino-acid sequence, 67 residues long: Putative antitoxin PF1308 (67 aa).

It belongs to the UPF0165 family.

In terms of biological role, possibly the antitoxin component of a type II toxin-antitoxin (TA) system. This is Putative antitoxin PF1308 from Pyrococcus furiosus (strain ATCC 43587 / DSM 3638 / JCM 8422 / Vc1).